The following is a 340-amino-acid chain: MNNRFLDACWGKPVDRTPVWLMRQAGRYLPEYMAVRSKCTFLELCKTPELAAEVTIQPIDILNVDAAILFSDILTPVEPMGLKLDFVPGPVFEHPVRTMADVEKLRIPNPEEDVPYVLDTIKILRRELAGRVPLIGFGGAPFTLACYMVEGKGSKDWANIKRMMYAAPDVYAALMDKVTMMDMEYLNAQIKAGAQAIQIFDTWGGVLSPTDYEKYVLPYTTKLINGLNRQNTPVIHFVKGAGTMLETVQKAGGDVMGLDWHVNLGKARDVLGQNMAVQGNLDPTVLYAPKEVIEAEVKRVLDENAGRPGHIFNLGHGILPTVPPENAIHMVECVHRLSQK.

Residues 23 to 27 (RQAGR), Asp72, Tyr147, Thr202, and His316 each bind substrate.

It belongs to the uroporphyrinogen decarboxylase family. In terms of assembly, homodimer.

Its subcellular location is the cytoplasm. It carries out the reaction uroporphyrinogen III + 4 H(+) = coproporphyrinogen III + 4 CO2. Its pathway is porphyrin-containing compound metabolism; protoporphyrin-IX biosynthesis; coproporphyrinogen-III from 5-aminolevulinate: step 4/4. Catalyzes the decarboxylation of four acetate groups of uroporphyrinogen-III to yield coproporphyrinogen-III. The protein is Uroporphyrinogen decarboxylase of Geobacter sulfurreducens (strain ATCC 51573 / DSM 12127 / PCA).